Here is a 61-residue protein sequence, read N- to C-terminus: Truncated 3-beta hydroxy-5-ene steroid dehydrogenase homolog (61 aa).

It belongs to the 3-beta-HSD family.

This is Truncated 3-beta hydroxy-5-ene steroid dehydrogenase homolog from Variola virus (isolate Human/India/Ind3/1967) (VARV).